We begin with the raw amino-acid sequence, 237 residues long: Peptidase E (237 aa).

Catalysis depends on charge relay system residues serine 122, aspartate 137, and histidine 159.

The protein belongs to the peptidase S51 family.

It is found in the cytoplasm. It carries out the reaction Dipeptidase E catalyzes the hydrolysis of dipeptides Asp-|-Xaa. It does not act on peptides with N-terminal Glu, Asn or Gln, nor does it cleave isoaspartyl peptides.. Hydrolyzes dipeptides containing N-terminal aspartate residues. May play a role in allowing the cell to use peptide aspartate to spare carbon otherwise required for the synthesis of the aspartate family of amino acids. In Shewanella baltica (strain OS185), this protein is Peptidase E.